The following is an 861-amino-acid chain: Semaphorin-4D (861 aa).

An N-terminal signal peptide occupies residues 1 to 23; it reads MRMCAPVRGLFLALVVVLRTAVA. Positions 24–500 constitute a Sema domain; the sequence is FAPVPRLTWE…SNSGVVQAPL (477 aa). The Extracellular segment spans residues 24–733; that stretch reads FAPVPRLTWE…TVYLKSSDNR (710 aa). Asn49 and Asn77 each carry an N-linked (GlcNAc...) asparagine glycan. Intrachain disulfides connect Cys97/Cys108 and Cys126/Cys135. Asn139 and Asn191 each carry an N-linked (GlcNAc...) asparagine glycan. Cystine bridges form between Cys257–Cys370 and Cys281–Cys326. N-linked (GlcNAc...) asparagine glycosylation is found at Asn379 and Asn419. The PSI domain maps to 502-551; the sequence is FCEKHGSCEDCVLARDPYCAWSPAIKACVTLHQEEASSRGWIQDMSGDTS. Cystine bridges form between Cys503–Cys520, Cys509–Cys553, Cys512–Cys529, and Cys576–Cys624. The Ig-like C2-type domain occupies 555-636; it reads DKSKESFNQH…EERVRNKTVS (82 aa). N-linked (GlcNAc...) asparagine glycosylation is found at Asn613 and Asn632. The tract at residues 649-709 is disordered; that stretch reads VPRTPPSPTS…KSSSGTSCEP (61 aa). A compositionally biased stretch (polar residues) spans 657-681; it reads TSEDAQTEGSKITSKMPVASTQGSS. Residues 734 to 754 traverse the membrane as a helical segment; that stretch reads LLMSLLLFIFVLFLCLFSYNC. Topologically, residues 755–861 are cytoplasmic; the sequence is YKGYLPGQCL…KFADSDADGD (107 aa). A phosphoserine mark is found at Ser782 and Ser832. Residues 793 to 839 are disordered; it reads VEPGSFSQQNGDHPKPALDTGYETEQDTITSKVPTDREDSQRIDELS. The segment covering 826 to 839 has biased composition (basic and acidic residues); the sequence is PTDREDSQRIDELS.

It belongs to the semaphorin family. Homodimer. Interacts with PLXNB1. Interacts with PLXNB2. Strongly expressed in lymphoid tissues, especially in the thymus, as well as in the nervous tissues. Expressed in neurons and glia in the developing hippocampus.

It localises to the cell membrane. Its function is as follows. Cell surface receptor for PLXNB1 and PLXNB2 that plays an important role in cell-cell signaling. Regulates GABAergic synapse development. Promotes the development of inhibitory synapses in a PLXNB1-dependent manner. Modulates the complexity and arborization of developing neurites in hippocampal neurons by activating PLXNB1 and interaction with PLXNB1 mediates activation of RHOA. Promotes the migration of cerebellar granule cells. Plays a role in the immune system; induces B-cells to aggregate and improves their viability (in vitro). Induces endothelial cell migration through the activation of PTK2B/PYK2, SRC, and the phosphatidylinositol 3-kinase-AKT pathway. The polypeptide is Semaphorin-4D (Sema4d) (Mus musculus (Mouse)).